Consider the following 279-residue polypeptide: GDT1-like protein 3 (279 aa).

The signal sequence occupies residues 1-23 (MDPNPRLLILLVLLAFSATVAVA). 6 helical membrane passes run 64–84 (VGPGLFDALFASLSMILVSEI), 103–123 (IVLSGALSALYVMTVLSTGLG), 135–155 (TNSAATVLYLFFGLRLLYIAW), 186–206 (FFGRFCTPIFLEAFILTFLAE), 224–244 (AIGVAVGASLGHTVCTSLAVI), and 258–278 (VATIGGVLFLGFSVSSYFYPP).

This sequence belongs to the GDT1 family.

It localises to the membrane. The sequence is that of GDT1-like protein 3 from Oryza sativa subsp. japonica (Rice).